The chain runs to 119 residues: Protein TusC (119 aa).

Belongs to the DsrF/TusC family. Heterohexamer, formed by a dimer of trimers. The hexameric TusBCD complex contains 2 copies each of TusB, TusC and TusD. The TusBCD complex interacts with TusE.

The protein resides in the cytoplasm. In terms of biological role, part of a sulfur-relay system required for 2-thiolation of 5-methylaminomethyl-2-thiouridine (mnm(5)s(2)U) at tRNA wobble positions. The polypeptide is Protein TusC (Pectobacterium atrosepticum (strain SCRI 1043 / ATCC BAA-672) (Erwinia carotovora subsp. atroseptica)).